Consider the following 536-residue polypeptide: CTP synthase (536 aa).

The tract at residues 1 to 266 (MKTKFIFVTG…DEQVVEKLNI (266 aa)) is amidoligase domain. Ser14 provides a ligand contact to CTP. Position 14 (Ser14) interacts with UTP. ATP is bound by residues 15 to 20 (SIGKGL) and Asp72. Positions 72 and 140 each coordinate Mg(2+). Residues 147–149 (DIE), 187–192 (KTKPTQ), and Lys223 contribute to the CTP site. Residues 187-192 (KTKPTQ) and Lys223 each bind UTP. The region spanning 292-534 (RIAIVGKYVN…IAAALDRKDK (243 aa)) is the Glutamine amidotransferase type-1 domain. Gly354 contributes to the L-glutamine binding site. Catalysis depends on Cys381, which acts as the Nucleophile; for glutamine hydrolysis. L-glutamine contacts are provided by residues 382–385 (LGMQ), Glu405, and Arg462. Residues His507 and Glu509 contribute to the active site.

The protein belongs to the CTP synthase family. Homotetramer.

The catalysed reaction is UTP + L-glutamine + ATP + H2O = CTP + L-glutamate + ADP + phosphate + 2 H(+). It carries out the reaction L-glutamine + H2O = L-glutamate + NH4(+). The enzyme catalyses UTP + NH4(+) + ATP = CTP + ADP + phosphate + 2 H(+). It participates in pyrimidine metabolism; CTP biosynthesis via de novo pathway; CTP from UDP: step 2/2. Allosterically activated by GTP, when glutamine is the substrate; GTP has no effect on the reaction when ammonia is the substrate. The allosteric effector GTP functions by stabilizing the protein conformation that binds the tetrahedral intermediate(s) formed during glutamine hydrolysis. Inhibited by the product CTP, via allosteric rather than competitive inhibition. Catalyzes the ATP-dependent amination of UTP to CTP with either L-glutamine or ammonia as the source of nitrogen. Regulates intracellular CTP levels through interactions with the four ribonucleotide triphosphates. The protein is CTP synthase of Geobacter sulfurreducens (strain ATCC 51573 / DSM 12127 / PCA).